Reading from the N-terminus, the 61-residue chain is MAKKSMIAKQKRPQKFKVQEYTRCERCGRPHSVIRKFKLCRICFRELAYKGQIPGVKKASW.

Residues Cys-24, Cys-27, Cys-40, and Cys-43 each coordinate Zn(2+).

Belongs to the universal ribosomal protein uS14 family. Zinc-binding uS14 subfamily. Part of the 30S ribosomal subunit. Contacts proteins S3 and S10. Zn(2+) is required as a cofactor.

In terms of biological role, binds 16S rRNA, required for the assembly of 30S particles and may also be responsible for determining the conformation of the 16S rRNA at the A site. This chain is Small ribosomal subunit protein uS14B, found in Oceanobacillus iheyensis (strain DSM 14371 / CIP 107618 / JCM 11309 / KCTC 3954 / HTE831).